A 340-amino-acid chain; its full sequence is tRNA N6-adenosine threonylcarbamoyltransferase (340 aa).

Residues His114 and His118 each coordinate Fe cation. Residues 140 to 144, Asp173, Gly186, Asp190, and Asn281 contribute to the substrate site; that span reads TISGG. Position 309 (Asp309) interacts with Fe cation.

This sequence belongs to the KAE1 / TsaD family. Requires Fe(2+) as cofactor.

It is found in the cytoplasm. The catalysed reaction is L-threonylcarbamoyladenylate + adenosine(37) in tRNA = N(6)-L-threonylcarbamoyladenosine(37) in tRNA + AMP + H(+). In terms of biological role, required for the formation of a threonylcarbamoyl group on adenosine at position 37 (t(6)A37) in tRNAs that read codons beginning with adenine. Is involved in the transfer of the threonylcarbamoyl moiety of threonylcarbamoyl-AMP (TC-AMP) to the N6 group of A37, together with TsaE and TsaB. TsaD likely plays a direct catalytic role in this reaction. This chain is tRNA N6-adenosine threonylcarbamoyltransferase, found in Christiangramia forsetii (strain DSM 17595 / CGMCC 1.15422 / KT0803) (Gramella forsetii).